The following is a 156-amino-acid chain: Small ribosomal subunit protein uS7 (156 aa).

It belongs to the universal ribosomal protein uS7 family. Part of the 30S ribosomal subunit. Contacts proteins S9 and S11.

Functionally, one of the primary rRNA binding proteins, it binds directly to 16S rRNA where it nucleates assembly of the head domain of the 30S subunit. Is located at the subunit interface close to the decoding center, probably blocks exit of the E-site tRNA. This is Small ribosomal subunit protein uS7 from Clostridium kluyveri (strain NBRC 12016).